We begin with the raw amino-acid sequence, 643 residues long: Protein cueball (643 aa).

The first 21 residues, Met-1–Gly-21, serve as a signal peptide directing secretion. The Extracellular segment spans residues Thr-22–Ser-530. Residues Asn-77 and Asn-103 are each glycosylated (N-linked (GlcNAc...) asparagine). LDL-receptor class B repeat units follow at residues Arg-116 to Arg-163, Arg-164 to Ser-208, and Asp-209 to Ala-254. The N-linked (GlcNAc...) asparagine glycan is linked to Asn-172. Positions Ala-276–Gly-290 are enriched in polar residues. The disordered stretch occupies residues Ala-276–Glu-303. An N-linked (GlcNAc...) asparagine glycan is attached at Asn-312. EGF-like domains lie at Arg-363 to Glu-397, Ile-398 to Glu-429, and Glu-432 to Glu-470. Cystine bridges form between Cys-372/Cys-385, Cys-387/Cys-396, Cys-401/Cys-410, Cys-405/Cys-420, Cys-436/Cys-446, Cys-440/Cys-458, and Cys-460/Cys-469. N-linked (GlcNAc...) asparagine glycosylation is found at Asn-472 and Asn-507. Residues Ser-531 to Ile-551 traverse the membrane as a helical segment. Residues His-552–Tyr-643 are Cytoplasmic-facing.

The protein belongs to the cueball family.

It is found in the cell membrane. Its function is as follows. Has a role in spermatogenesis and oogenesis. The protein is Protein cueball of Drosophila ananassae (Fruit fly).